We begin with the raw amino-acid sequence, 179 residues long: DELTA-miturgitoxin-Cp2a (179 aa).

An N-terminal signal peptide occupies residues 1-20; it reads MKFSLFFGVLFLAILHSCLS. Positions 21–47 are excised as a propeptide; the sequence is ESEKDLTDEDHFRSSDSFLSEIQEESR. A Processing quadruplet motif motif is present at residues 44–47; that stretch reads EESR. 8 disulfide bridges follow: Cys51/Cys66, Cys58/Cys75, Cys65/Cys88, Cys77/Cys86, Cys115/Cys130, Cys122/Cys139, Cys129/Cys158, and Cys141/Cys156. Val178 bears the Valine amide mark.

This sequence belongs to the spider toxin CSTX family. Double-CSTX subfamily. In terms of processing, cleavage of the propeptide depends on the processing quadruplet motif (XXXR, with at least one of X being E). In terms of tissue distribution, expressed by the venom gland.

The protein localises to the secreted. Functionally, spider venom toxin that exhibits cytolytic activity by forming an alpha-helix across the membrane. Lethal to insect larvae. In Cheiracanthium punctorium (Yellow sac spider), this protein is DELTA-miturgitoxin-Cp2a.